The primary structure comprises 368 residues: tRNA-specific 2-thiouridylase MnmA (368 aa).

ATP is bound by residues 11-18 (GMSGGVDS) and Met37. The interaction with target base in tRNA stretch occupies residues 97–99 (NPD). Catalysis depends on Cys102, which acts as the Nucleophile. Cys102 and Cys199 are oxidised to a cystine. Gly127 is a binding site for ATP. Residues 149–151 (KDQ) are interaction with tRNA. Cys199 serves as the catalytic Cysteine persulfide intermediate. The tract at residues 311–312 (RY) is interaction with tRNA.

It belongs to the MnmA/TRMU family. As to quaternary structure, interacts with TusE.

It localises to the cytoplasm. It carries out the reaction S-sulfanyl-L-cysteinyl-[protein] + uridine(34) in tRNA + AH2 + ATP = 2-thiouridine(34) in tRNA + L-cysteinyl-[protein] + A + AMP + diphosphate + H(+). Its function is as follows. Catalyzes the 2-thiolation of uridine at the wobble position (U34) of tRNA(Lys), tRNA(Glu) and tRNA(Gln), leading to the formation of s(2)U34, the first step of tRNA-mnm(5)s(2)U34 synthesis. Sulfur is provided by IscS, via a sulfur-relay system. Binds ATP and its substrate tRNAs. The protein is tRNA-specific 2-thiouridylase MnmA of Escherichia coli O1:K1 / APEC.